The chain runs to 292 residues: 2-dehydro-3-deoxygalactonokinase (292 aa).

The protein belongs to the DgoK family.

It carries out the reaction 2-dehydro-3-deoxy-D-galactonate + ATP = 2-dehydro-3-deoxy-6-phospho-D-galactonate + ADP + H(+). The protein operates within carbohydrate acid metabolism; D-galactonate degradation; D-glyceraldehyde 3-phosphate and pyruvate from D-galactonate: step 2/3. The sequence is that of 2-dehydro-3-deoxygalactonokinase (dgoK) from Escherichia coli (strain K12).